Consider the following 339-residue polypeptide: Ketol-acid reductoisomerase (NADP(+)) (339 aa).

The KARI N-terminal Rossmann domain occupies methionine 1–threonine 182. Residues tyrosine 24–glutamine 27, arginine 48, serine 51, threonine 53, and aspartate 83–glutamine 86 each bind NADP(+). Histidine 108 is an active-site residue. Glycine 134 is an NADP(+) binding site. Positions asparagine 183–isoleucine 328 constitute a KARI C-terminal knotted domain. Residues aspartate 191, glutamate 195, glutamate 227, and glutamate 231 each coordinate Mg(2+). Residue serine 252 coordinates substrate.

Belongs to the ketol-acid reductoisomerase family. Mg(2+) is required as a cofactor.

The enzyme catalyses (2R)-2,3-dihydroxy-3-methylbutanoate + NADP(+) = (2S)-2-acetolactate + NADPH + H(+). The catalysed reaction is (2R,3R)-2,3-dihydroxy-3-methylpentanoate + NADP(+) = (S)-2-ethyl-2-hydroxy-3-oxobutanoate + NADPH + H(+). The protein operates within amino-acid biosynthesis; L-isoleucine biosynthesis; L-isoleucine from 2-oxobutanoate: step 2/4. It participates in amino-acid biosynthesis; L-valine biosynthesis; L-valine from pyruvate: step 2/4. In terms of biological role, involved in the biosynthesis of branched-chain amino acids (BCAA). Catalyzes an alkyl-migration followed by a ketol-acid reduction of (S)-2-acetolactate (S2AL) to yield (R)-2,3-dihydroxy-isovalerate. In the isomerase reaction, S2AL is rearranged via a Mg-dependent methyl migration to produce 3-hydroxy-3-methyl-2-ketobutyrate (HMKB). In the reductase reaction, this 2-ketoacid undergoes a metal-dependent reduction by NADPH to yield (R)-2,3-dihydroxy-isovalerate. This is Ketol-acid reductoisomerase (NADP(+)) from Caulobacter sp. (strain K31).